A 142-amino-acid polypeptide reads, in one-letter code: Semaphorin-like protein VACWR164 (142 aa).

Positions 1 to 142 (MNTIKQSFST…MPQMKKILKM (142 aa)) constitute a Sema domain.

Belongs to the semaphorin family.

The chain is Semaphorin-like protein VACWR164 from Bos taurus (Bovine).